A 1666-amino-acid polypeptide reads, in one-letter code: Complement C3 (1666 aa).

An N-terminal signal peptide occupies residues 1–22 (MGPAAGPSLLLLLLASVSLALG). 3 positions are modified to phosphoserine: Ser70, Ser296, and Ser302. 13 disulfides stabilise this stretch: Cys557–Cys821, Cys630–Cys666, Cys698–Cys725, Cys699–Cys732, Cys712–Cys733, Cys878–Cys1517, Cys1106–Cys1163, Cys1363–Cys1493, Cys1394–Cys1462, Cys1510–Cys1515, Cys1522–Cys1593, Cys1540–Cys1664, and Cys1640–Cys1649. Ser676 is subject to Phosphoserine. In terms of domain architecture, Anaphylatoxin-like spans 698 to 733 (CCEDGMRENPMQFSCQRRARYVSLGEACVKAFLDCC). N-linked (GlcNAc...) asparagine glycosylation is present at Asn944. Ser973 carries the phosphoserine modification. The isoglutamyl cysteine thioester (Cys-Gln) cross-link spans 1015–1018 (CGEQ). Ser1326 is modified (phosphoserine). The region spanning 1522–1664 (CFIQLPEKIT…FTENMVVFGC (143 aa)) is the NTR domain. Phosphoserine is present on Ser1576. Asn1620 carries an N-linked (GlcNAc...) asparagine glycan. The interaction with CFP/properdin stretch occupies residues 1637–1662 (AEECQDEENQQQCQDLGTFTENMVVF).

In absence of complement activation, the C3 precursor is first processed by the removal of 4 Arg residues, forming two chains, beta and alpha, linked by a disulfide bond. In terms of assembly, complement C3b is composed of complement C3b and complement C3 beta chains that are associated via disulfide bonds. Non-enzymatic component of the C5 convertase, also named C4bC2bC3b, composed of the serine protease complement C2b (C2), complement C3b, as well as complement C4b (C4). Non-enzymatic component of the C5 convertase of the alternative complement pathways composed of the serine protease complement CFB and complement C3b. Interacts with CFP; interaction takes place together with CFB in the alternative complement system and allows the complex to become active. Interacts with CR1 (via Sushi 8 and Sushi 9 domains). Interacts with CFH. As to quaternary structure, interacts with CFH. Interacts with CR2. During pregnancy, C3dg exists as a complex (probably a 2:2:2 heterohexamer) with AGT and the proform of PRG2. Interacts with CR2 (via the N-terminal Sushi domains 1 and 2). Post-translationally, C3 precursor is first processed by the removal of 4 Arg residues, forming two chains, beta and alpha, linked by a disulfide bond. During activation of the complement systems, the alpha chain is cleaved into C3a and C3b by the C3 convertase: C3b stays linked to the beta chain, while C3a is released in the plasma. The alpha chain is cleaved by the serine protease complement C2b component of the C3 convertase to generate C3a and C3b following activation by the classical, lectin and GZMK complement systems. The alpha chain is cleaved by CFB component of the C3 convertase to generate C3a and C3b following activation by the alternative complement system. C3a is further processed by carboxypeptidases to release the C-terminal arginine residue generating the acylation stimulating protein (ASP). Levels of ASP are increased in adipocytes in the postprandial period and by insulin and dietary chylomicrons. In terms of processing, complement C3b is rapidly split in two positions by factor I (CFI) and a cofactor (CFH) to form iC3b (inactivated C3b) and C3f which is released. CFI and CFH catalyze proteolytic degradation of already-deposited complement C3b. Then iC3b is slowly cleaved (possibly by CFI) to form C3c (beta chain + alpha' chain fragment 1 + alpha' chain fragment 2), C3dg and C3f. Other proteases produce other fragments such as C3d or C3g. Post-translationally, upon activation, the internal thioester bond reacts with carbohydrate antigens on the target surface to form amide or ester bonds, leading to covalent association with the surface of pathogens. Complement C3b interacts with complement C4b via a thioester linkage. In terms of processing, phosphorylated by FAM20C in the extracellular medium.

It localises to the secreted. The protein localises to the cell surface. With respect to regulation, complement activation is inhibited by VSIG4. Functionally, precursor of non-enzymatic components of the classical, alternative, lectin and GZMK complement pathways, which consist in a cascade of proteins that leads to phagocytosis and breakdown of pathogens and signaling that strengthens the adaptive immune system. Its function is as follows. Non-enzymatic component of C5 convertase. Generated following cleavage by C3 convertase, it covalently attaches to the surface of pathogens, where it acts as an opsonin that marks the surface of antigens for removal. Complement C3b binds covalently via its reactive thioester, to cell surface carbohydrates or immune aggregates. Together with complement C4b, it then recruits the serine protease complement C2b to form the C5 convertase, which cleaves and activate C5, the next component of the complement pathways. In the alternative complement pathway, recruits the serine protease CFB to form the C5 convertase that cleaves and activates C5. In terms of biological role, mediator of local inflammatory process released following cleavage by C3 convertase. Acts by binding to its receptor, C3AR1, activating G protein-coupled receptor signaling, promoting the phosphorylation, ARRB2-mediated internalization and endocytosis of C3AR1. C3a anaphylatoxin stimulates the activation of immune cells such as mast cells and basophilic leukocytes to release inflammation agents, such as cytokines, chemokines and histamine, which promote inflammation development. Also acts as potent chemoattractant for the migration of macrophages and neutrophils to the inflamed tissues, resulting in neutralization of the inflammatory triggers by multiple ways, such as phagocytosis and generation of reactive oxidants. Adipogenic hormone that stimulates triglyceride synthesis and glucose transport in adipocytes, regulating fat storage and playing a role in postprandial triglyceride clearance. Appears to stimulate triglyceride synthesis via activation of the PLC, MAPK and AKT signaling pathways. Acts by binding to its receptor, C5AR2, activating G protein-coupled receptor signaling, promoting the phosphorylation, ARRB2-mediated internalization and endocytosis of C5AR2. Functionally, acts as a chemoattractant for neutrophils in chronic inflammation. The sequence is that of Complement C3 from Cavia porcellus (Guinea pig).